The sequence spans 228 residues: L-ribulose-5-phosphate 4-epimerase UlaF (228 aa).

Residues 26 to 27 (GN), 43 to 44 (SG), and 72 to 73 (SS) contribute to the substrate site. 3 residues coordinate Zn(2+): Asp-74, His-93, and His-95. Residue Asp-118 is the Proton donor/acceptor of the active site. His-167 provides a ligand contact to Zn(2+). Tyr-225 (proton donor/acceptor) is an active-site residue.

This sequence belongs to the aldolase class II family. AraD/FucA subfamily. It depends on Zn(2+) as a cofactor.

The catalysed reaction is L-ribulose 5-phosphate = D-xylulose 5-phosphate. The protein operates within cofactor degradation; L-ascorbate degradation; D-xylulose 5-phosphate from L-ascorbate: step 4/4. Its function is as follows. Catalyzes the isomerization of L-ribulose 5-phosphate to D-xylulose 5-phosphate. Is involved in the anaerobic L-ascorbate utilization. This is L-ribulose-5-phosphate 4-epimerase UlaF from Escherichia coli O8 (strain IAI1).